We begin with the raw amino-acid sequence, 372 residues long: Alanine racemase (372 aa).

Lys-36 serves as the catalytic Proton acceptor; specific for D-alanine. An N6-(pyridoxal phosphate)lysine modification is found at Lys-36. Arg-134 is a substrate binding site. Catalysis depends on Tyr-266, which acts as the Proton acceptor; specific for L-alanine. Position 314 (Met-314) interacts with substrate.

This sequence belongs to the alanine racemase family. Pyridoxal 5'-phosphate is required as a cofactor.

It carries out the reaction L-alanine = D-alanine. It participates in amino-acid biosynthesis; D-alanine biosynthesis; D-alanine from L-alanine: step 1/1. Functionally, catalyzes the interconversion of L-alanine and D-alanine. May also act on other amino acids. The protein is Alanine racemase (alr) of Nitratidesulfovibrio vulgaris (strain DSM 19637 / Miyazaki F) (Desulfovibrio vulgaris).